The sequence spans 320 residues: Cytochrome f (320 aa).

The first 35 residues, 1–35, serve as a signal peptide directing secretion; it reads MQMRNTFSWIKEEIIRFIAVSLIIYIITRAPISNA. Heme contacts are provided by Tyr36, Cys56, Cys59, and His60. The helical transmembrane segment at 286 to 306 threads the bilayer; that stretch reads VQGLLLFLASIILAQIFLVLK.

This sequence belongs to the cytochrome f family. In terms of assembly, the 4 large subunits of the cytochrome b6-f complex are cytochrome b6, subunit IV (17 kDa polypeptide, petD), cytochrome f and the Rieske protein, while the 4 small subunits are PetG, PetL, PetM and PetN. The complex functions as a dimer. Heme is required as a cofactor.

It is found in the plastid. It localises to the chloroplast thylakoid membrane. Its function is as follows. Component of the cytochrome b6-f complex, which mediates electron transfer between photosystem II (PSII) and photosystem I (PSI), cyclic electron flow around PSI, and state transitions. The polypeptide is Cytochrome f (Morus indica (Mulberry)).